Consider the following 174-residue polypeptide: Guided entry of tail-anchored proteins factor 1 (174 aa).

Over 1–8 (MSSAAADH) the chain is Lumenal. A helical transmembrane segment spans residues 9 to 29 (WAWLLVLSFVFGCNVLRILLP). Residues 30-99 (SFSSFMSRVL…VKARTAQLAK (70 aa)) are Cytoplasmic-facing. Positions 39–94 (LQKDAEQESQMRAEIQDMKQELSTVNMMDEFARYARLERKINKMTDKLKTHVKART) form a coiled coil. The tract at residues 39-97 (LQKDAEQESQMRAEIQDMKQELSTVNMMDEFARYARLERKINKMTDKLKTHVKARTAQL) is interaction with GET3/TRC40. A helical membrane pass occupies residues 100–120 (IKWVISVAFYVLQAALMISLI). The Lumenal segment spans residues 121 to 148 (WKYYSVPVAVVPSKWITPLDRLVAFPTR). The chain crosses the membrane as a helical span at residues 149-169 (VAGGVGITCWILVCNKVVAIV). Over 170-174 (LHPFS) the chain is Cytoplasmic.

Belongs to the WRB/GET1 family. Component of the Golgi to ER traffic (GET) complex, which is composed of GET1/WRB, CAMLG/GET2 and GET3/TRC40. Within the complex, GET1 and CAMLG form a heterotetramer which is stabilized by phosphatidylinositol binding and which binds to the GET3 homodimer. Interacts with CAMLG (via C-terminus). GET3 shows a higher affinity for CAMLG than for GET1.

The protein resides in the endoplasmic reticulum membrane. Its function is as follows. Required for the post-translational delivery of tail-anchored (TA) proteins to the endoplasmic reticulum (ER). Together with CAMLG/GET2, acts as a membrane receptor for soluble GET3/TRC40, which recognizes and selectively binds the transmembrane domain of TA proteins in the cytosol. Required to ensure correct topology and ER insertion of CAMLG. The chain is Guided entry of tail-anchored proteins factor 1 from Homo sapiens (Human).